The sequence spans 393 residues: SET domain-containing protein DDB_G0283443 (393 aa).

Positions 17–312 constitute an SET domain; sequence KKIEINETLE…KGDELSISYI (296 aa).

Belongs to the class V-like SAM-binding methyltransferase superfamily.

Functionally, probable methyltransferase. This is SET domain-containing protein DDB_G0283443 from Dictyostelium discoideum (Social amoeba).